The chain runs to 140 residues: Peptidyl-prolyl cis-trans isomerase FKBP2 (140 aa).

The first 22 residues, 1–22 (MRLSWILTILSICLSALAAATG), serve as a signal peptide directing secretion. Residues 47–135 (GDVLHMHYTG…VFEVELLKIE (89 aa)) enclose the PPIase FKBP-type domain. The Prevents secretion from ER motif lies at 137 to 140 (RSEL).

This sequence belongs to the FKBP-type PPIase family. FKBP2 subfamily. In terms of assembly, interacts with ARFGEF1/BIG1 and the C-terminal of EPB41L2.

The protein resides in the endoplasmic reticulum membrane. The catalysed reaction is [protein]-peptidylproline (omega=180) = [protein]-peptidylproline (omega=0). With respect to regulation, inhibited by both FK506 and rapamycin. In terms of biological role, PPIases accelerate the folding of proteins. It catalyzes the cis-trans isomerization of proline imidic peptide bonds in oligopeptides. In Mus musculus (Mouse), this protein is Peptidyl-prolyl cis-trans isomerase FKBP2 (Fkbp2).